The following is a 582-amino-acid chain: Vesicular glutamate transporter 2 (582 aa).

Residues 1-71 (MESVKQRILA…CTCFGLPRRY (71 aa)) are Cytoplasmic-facing. The chain crosses the membrane as a helical span at residues 72–92 (IIAIMSGLGFCISFGIRCNLG). The Vesicular segment spans residues 93–125 (VAIVDMVNNSTIHRGGKVIKEKAKFNWDPETVG). Residues N100 and N101 are each glycosylated (N-linked (GlcNAc...) asparagine). Residues 126–146 (MIHGSFFWGYIITQIPGGYIA) traverse the membrane as a helical segment. Over 147–148 (SR) the chain is Cytoplasmic. Residues 149-169 (LAANRVFGAAILLTSTLNMLI) form a helical membrane-spanning segment. Residues 170 to 177 (PSAARVHY) lie on the Vesicular side of the membrane. Residues 178 to 198 (GCVIFVRILQGLVEGVTYPAC) form a helical membrane-spanning segment. Residues 199–216 (HGIWSKWAPPLERSRLAT) lie on the Cytoplasmic side of the membrane. The helical transmembrane segment at 217–237 (TSFCGSYAGAVIAMPLAGILV) threads the bilayer. Residues 238 to 244 (QYTGWSS) are Vesicular-facing. The chain crosses the membrane as a helical span at residues 245–265 (VFYVYGSFGMVWYMFWLLVSY). Topologically, residues 266 to 310 (ESPAKHPTITDEERRYIEESIGESANLLGAMEKFKTPWRKFFTSM) are cytoplasmic. Residues 311–331 (PVYAIIVANFCRSWTFYLLLI) form a helical membrane-spanning segment. Topologically, residues 332–349 (SQPAYFEEVFGFEISKVG) are vesicular. The helical transmembrane segment at 350-370 (MLSAVPHLVMTIIVPIGGQIA) threads the bilayer. Residues 371–386 (DFLRSKQILSTTTVRK) lie on the Cytoplasmic side of the membrane. Residues 387–407 (IMNCGGFGMEATLLLVVGYSH) form a helical membrane-spanning segment. Residues 408–409 (TR) lie on the Vesicular side of the membrane. The chain crosses the membrane as a helical span at residues 410–430 (GVAISFLVLAVGFSGFAISGF). Over 431–443 (NVNHLDIAPRYAS) the chain is Cytoplasmic. The chain crosses the membrane as a helical span at residues 444–464 (ILMGISNGVGTLSGMVCPIIV). At 465–477 (GAMTKNKSREEWQ) the chain is on the vesicular side. N470 carries N-linked (GlcNAc...) asparagine glycosylation. The helical transmembrane segment at 478-498 (YVFLIAALVHYGGVIFYAIFA) threads the bilayer. Residues 499–582 (SGEKQPWADP…HSYKDRVDYS (84 aa)) lie on the Cytoplasmic side of the membrane.

It belongs to the major facilitator superfamily. Sodium/anion cotransporter family. VGLUT subfamily. Predominantly expressed in adult brain. Expressed in amygdala, caudate nucleus, cerebral cortex, frontal lobe, hippocampus, medulla, occipital lobe, putamen, spinal cord, substantia nigra, subthalamic nucleus, temporal lobe and thalamus.

It localises to the cytoplasmic vesicle. Its subcellular location is the secretory vesicle. The protein localises to the synaptic vesicle membrane. It is found in the synapse. The protein resides in the synaptosome. It localises to the cell membrane. The enzyme catalyses L-glutamate(out) = L-glutamate(in). It carries out the reaction 3 Na(+)(out) + phosphate(out) = 3 Na(+)(in) + phosphate(in). The catalysed reaction is phosphate(in) = phosphate(out). It catalyses the reaction K(+)(in) + H(+)(out) = K(+)(out) + H(+)(in). The enzyme catalyses chloride(in) = chloride(out). With respect to regulation, chloride channel activity is allosterically activated by lumenal H(+) and Cl(-) leading to synaptic vesicles acidification. The L-glutamate transport activity is allosterically activated by lumenal H(+) and Cl(-). The allosteric requirement for H(+) efficiently prevents non-vesicular efflux across the plasma membrane. The L-glutamate uniporter activity exhibits a biphasic dependence on chloride concentration. Its function is as follows. Multifunctional transporter that transports L-glutamate as well as multiple ions such as chloride, proton, potassium, sodium and phosphate. At the synaptic vesicle membrane, mainly functions as a uniporter which transports preferentially L-glutamate but also, phosphate from the cytoplasm into synaptic vesicles at presynaptic nerve terminals of excitatory neural cells. The L-glutamate or phosphate uniporter activity is electrogenic and is driven by the proton electrochemical gradient, mainly by the electrical gradient established by the vacuolar H(+)-ATPase across the synaptic vesicle membrane. In addition, functions as a chloride channel that allows the chloride permeation through the synaptic vesicle membrane therefore affects the proton electrochemical gradient and promotes synaptic vesicles acidification. Moreover, functions as a vesicular K(+)/H(+) antiport allowing to maintain the electrical gradient and to decrease chemical gradient and therefore sustain vesicular glutamate uptake. The vesicular H(+)/H(+) antiport activity is electroneutral. At the plasma membrane, following exocytosis, functions as a symporter of Na(+) and phosphate from the extracellular space to the cytoplasm allowing synaptic phosphate homeostasis regulation. The symporter activity is driven by an inside negative membrane potential and is electrogenic. Also involved in the regulation of retinal hyaloid vessel regression during postnatal development. May also play a role in the endocrine glutamatergic system of other tissues such as pineal gland and pancreas. This chain is Vesicular glutamate transporter 2, found in Homo sapiens (Human).